The chain runs to 662 residues: UvrABC system protein B (662 aa).

Positions 31-188 constitute a Helicase ATP-binding domain; sequence DNIEGGEKAQ…NDLVDIQFER (158 aa). 44–51 contributes to the ATP binding site; sequence GATGTGKT. The short motif at 97–120 is the Beta-hairpin element; that stretch reads YYDYYQPEAYVPSSDTYIEKDSSV. Residues 435–601 form the Helicase C-terminal domain; the sequence is QIDDLLGEIN…TIKKEIRDLI (167 aa). Residues 626–661 form the UVR domain; the sequence is KELVKKLEKQMQEAVEVLDFELAAQIRDMMLEVKAL.

Belongs to the UvrB family. Forms a heterotetramer with UvrA during the search for lesions. Interacts with UvrC in an incision complex.

The protein localises to the cytoplasm. Its function is as follows. The UvrABC repair system catalyzes the recognition and processing of DNA lesions. A damage recognition complex composed of 2 UvrA and 2 UvrB subunits scans DNA for abnormalities. Upon binding of the UvrA(2)B(2) complex to a putative damaged site, the DNA wraps around one UvrB monomer. DNA wrap is dependent on ATP binding by UvrB and probably causes local melting of the DNA helix, facilitating insertion of UvrB beta-hairpin between the DNA strands. Then UvrB probes one DNA strand for the presence of a lesion. If a lesion is found the UvrA subunits dissociate and the UvrB-DNA preincision complex is formed. This complex is subsequently bound by UvrC and the second UvrB is released. If no lesion is found, the DNA wraps around the other UvrB subunit that will check the other stand for damage. The sequence is that of UvrABC system protein B from Streptococcus pneumoniae (strain Hungary19A-6).